Consider the following 437-residue polypeptide: Exosome complex component RRP45 (437 aa).

Ser65 carries the post-translational modification Phosphoserine. N6-acetyllysine; alternate is present on Lys297. Residue Lys297 forms a Glycyl lysine isopeptide (Lys-Gly) (interchain with G-Cter in SUMO1); alternate linkage. Residue Lys297 forms a Glycyl lysine isopeptide (Lys-Gly) (interchain with G-Cter in SUMO2); alternate linkage. 2 positions are modified to phosphoserine: Ser306 and Ser346. The disordered stretch occupies residues 339-437 (IGEGIENSWG…KRRKKKRTAN (99 aa)). Residues 349–363 (DLEDSEKEEEEEGGI) are compositionally biased toward acidic residues. A phosphoserine mark is found at Ser392, Ser394, and Ser407. The segment covering 413–425 (AQTSANQKAPSKS) has biased composition (polar residues). Basic residues predominate over residues 426–437 (QGKRRKKKRTAN).

The protein belongs to the RNase PH family. Component of the RNA exosome core complex (Exo-9), composed of EXOSC1, EXOSC2, EXOSC3, EXOSC4, EXOSC5, EXOSC6, EXOSC7, EXOSC8 and EXOSC9; within the complex interacts with EXOSC3, EXOSC4, EXOSC5 and DIS3. The catalytically inactive RNA exosome core complex (Exo-9) associates with the catalytic subunit EXOSC10/RRP6. Exo-9 may associate with DIS3 to form the nucleolar exosome complex, or DIS3L to form the cytoplasmic exosome complex. Exo-9 is formed by a hexameric base ring consisting of the heterodimers EXOSC4-EXOSC9, EXOSC5-EXOSC8 and EXOSC6-EXOSC7, and a cap ring consisting of EXOSC1, EXOSC2 and EXOSC3. The RNA exosome complex associates with cofactors C1D/RRP47, MPHOSPH6/MPP6 and MTREX/MTR4. Interacts (via C-terminus region) with SETX (via N-terminus domain); the interaction enhances SETX sumoylation. Interacts with DIS3; the interaction is direct.

The protein resides in the cytoplasm. Its subcellular location is the nucleus. The protein localises to the nucleolus. It is found in the nucleoplasm. Its function is as follows. Non-catalytic component of the RNA exosome complex which has 3'-&gt;5' exoribonuclease activity and participates in a multitude of cellular RNA processing and degradation events. In the nucleus, the RNA exosome complex is involved in proper maturation of stable RNA species such as rRNA, snRNA and snoRNA, in the elimination of RNA processing by-products and non-coding 'pervasive' transcripts, such as antisense RNA species and promoter-upstream transcripts (PROMPTs), and of mRNAs with processing defects, thereby limiting or excluding their export to the cytoplasm. The RNA exosome may be involved in Ig class switch recombination (CSR) and/or Ig variable region somatic hypermutation (SHM) by targeting AICDA deamination activity to transcribed dsDNA substrates. In the cytoplasm, the RNA exosome complex is involved in general mRNA turnover and specifically degrades inherently unstable mRNAs containing AU-rich elements (AREs) within their 3' untranslated regions, and in RNA surveillance pathways, preventing translation of aberrant mRNAs. It seems to be involved in degradation of histone mRNA. The catalytic inactive RNA exosome core complex of 9 subunits (Exo-9) is proposed to play a pivotal role in the binding and presentation of RNA for ribonucleolysis, and to serve as a scaffold for the association with catalytic subunits and accessory proteins or complexes. EXOSC9 binds to ARE-containing RNAs. The sequence is that of Exosome complex component RRP45 (Exosc9) from Rattus norvegicus (Rat).